Here is a 292-residue protein sequence, read N- to C-terminus: tRNA pseudouridine synthase B (292 aa).

The active-site Nucleophile is Asp38.

This sequence belongs to the pseudouridine synthase TruB family. Type 1 subfamily.

The catalysed reaction is uridine(55) in tRNA = pseudouridine(55) in tRNA. In terms of biological role, responsible for synthesis of pseudouridine from uracil-55 in the psi GC loop of transfer RNAs. This chain is tRNA pseudouridine synthase B, found in Streptococcus pneumoniae serotype 2 (strain D39 / NCTC 7466).